A 449-amino-acid chain; its full sequence is Exodeoxyribonuclease 7 large subunit (449 aa).

The protein belongs to the XseA family. In terms of assembly, heterooligomer composed of large and small subunits.

It is found in the cytoplasm. The catalysed reaction is Exonucleolytic cleavage in either 5'- to 3'- or 3'- to 5'-direction to yield nucleoside 5'-phosphates.. Its function is as follows. Bidirectionally degrades single-stranded DNA into large acid-insoluble oligonucleotides, which are then degraded further into small acid-soluble oligonucleotides. In Salmonella agona (strain SL483), this protein is Exodeoxyribonuclease 7 large subunit.